Consider the following 146-residue polypeptide: MKVLLLLAASIMAFGSIQVQGNIAQFGEMIRLKTGKRAELSYAFYGCHCGLGGKGSPKDATDRCCVTHDCCYKSLEKSGCGTKLLKYKYSHQGGQITCSANQNSCQKRLCQCDKAAAECFARNKKTYSLKYQFYPNMFCKGKKPKC.

The signal sequence occupies residues 1–21 (MKVLLLLAASIMAFGSIQVQG). Disulfide bonds link cysteine 47-cysteine 139, cysteine 49-cysteine 65, cysteine 64-cysteine 119, cysteine 70-cysteine 146, cysteine 71-cysteine 112, cysteine 80-cysteine 105, and cysteine 98-cysteine 110. Ca(2+)-binding residues include histidine 48, glycine 50, and glycine 52. Residue histidine 68 is part of the active site. Aspartate 69 is a Ca(2+) binding site. Aspartate 113 is a catalytic residue.

This sequence belongs to the phospholipase A2 family. Ca(2+) is required as a cofactor. Mainly in the Paneth cells adjacent to the stem population in the small intestines.

The protein resides in the secreted. Its subcellular location is the cell membrane. It localises to the mitochondrion outer membrane. The enzyme catalyses a 1,2-diacyl-sn-glycero-3-phosphoethanolamine + H2O = a 1-acyl-sn-glycero-3-phosphoethanolamine + a fatty acid + H(+). It carries out the reaction 1-hexadecanoyl-2-(9Z-octadecenoyl)-sn-glycero-3-phosphoethanolamine + H2O = 1-hexadecanoyl-sn-glycero-3-phosphoethanolamine + (9Z)-octadecenoate + H(+). It catalyses the reaction 1-hexadecanoyl-2-(9Z,12Z-octadecadienoyl)-sn-glycero-3-phosphoethanolamine + H2O = 1-hexadecanoyl-sn-glycero-3-phosphoethanolamine + (9Z,12Z)-octadecadienoate + H(+). The catalysed reaction is 1-hexadecanoyl-2-(5Z,8Z,11Z,14Z-eicosatetraenoyl)-sn-glycero-3-phosphoethanolamine + H2O = 1-hexadecanoyl-sn-glycero-3-phosphoethanolamine + (5Z,8Z,11Z,14Z)-eicosatetraenoate + H(+). The enzyme catalyses N-hexadecanoyl-1,2-di-(9Z-octadecenoyl)-sn-glycero-3-phosphoethanolamine + H2O = N-hexadecanoyl-1-(9Z-octadecenoyl)-sn-glycero-3-phosphoethanolamine + (9Z)-octadecenoate + H(+). It carries out the reaction 1,2-dihexadecanoyl-sn-glycero-3-phospho-(1'-sn-glycerol) + H2O = 1-hexadecanoyl-sn-glycero-3-phospho-(1'-sn-glycerol) + hexadecanoate + H(+). It catalyses the reaction 1-hexadecanoyl-2-(9Z-octadecenoyl)-sn-glycero-3-phosphoglycerol + H2O = 1-hexadecanoyl-sn-glycero-3-phosphoglycerol + (9Z)-octadecenoate + H(+). The catalysed reaction is 1-hexadecanoyl-2-(9Z-octadecenoyl)-sn-glycero-3-phospho-(1'-sn-glycerol) + H2O = 1-hexadecanoyl-sn-glycero-3-phospho-(1'-sn-glycerol) + (9Z)-octadecenoate + H(+). The enzyme catalyses a 1,2-diacyl-sn-glycero-3-phosphocholine + H2O = a 1-acyl-sn-glycero-3-phosphocholine + a fatty acid + H(+). It carries out the reaction 1,2-dihexadecanoyl-sn-glycero-3-phosphocholine + H2O = 1-hexadecanoyl-sn-glycero-3-phosphocholine + hexadecanoate + H(+). It catalyses the reaction 1-hexadecanoyl-2-(9Z-octadecenoyl)-sn-glycero-3-phosphocholine + H2O = 1-hexadecanoyl-sn-glycero-3-phosphocholine + (9Z)-octadecenoate + H(+). The catalysed reaction is 1-hexadecanoyl-2-(9Z,12Z-octadecadienoyl)-sn-glycero-3-phosphocholine + H2O = (9Z,12Z)-octadecadienoate + 1-hexadecanoyl-sn-glycero-3-phosphocholine + H(+). The enzyme catalyses 1-hexadecanoyl-2-(4Z,7Z,10Z,13Z,16Z,19Z-docosahexaenoyl)-sn-glycero-3-phosphocholine + H2O = (4Z,7Z,10Z,13Z,16Z,19Z)-docosahexaenoate + 1-hexadecanoyl-sn-glycero-3-phosphocholine + H(+). In terms of biological role, secretory calcium-dependent phospholipase A2 that primarily targets extracellular phospholipids with implications in host antimicrobial defense, inflammatory response and tissue regeneration. Hydrolyzes the ester bond of the fatty acyl group attached at sn-2 position of phospholipids (phospholipase A2 activity) with preference for phosphatidylethanolamines and phosphatidylglycerols over phosphatidylcholines. Contributes to lipid remodeling of cellular membranes and generation of lipid mediators involved in pathogen clearance. Displays bactericidal activity against Gram-positive bacteria by directly hydrolyzing phospholipids of the bacterial membrane. Upon sterile inflammation, targets membrane phospholipids of extracellular mitochondria released from activated platelets, generating free unsaturated fatty acids such as arachidonate that is used by neighboring leukocytes to synthesize inflammatory eicosanoids such as leukotrienes. Simultaneously, by compromising mitochondrial membrane integrity, promotes the release in circulation of potent damage-associated molecular pattern molecules that activate the innate immune response. Plays a stem cell regulator role in the intestinal crypt. Within intracellular compartment mediates Paneth cell differentiation and its stem cell supporting functions by inhibiting Wnt signaling pathway in intestinal stem cell (ICS). Secreted in the intestinal lumen upon inflammation, acts in an autocrine way and promotes prostaglandin E2 synthesis that stimulates Wnt signaling pathway in ICS cells and tissue regeneration. May play a role in the biosynthesis of N-acyl ethanolamines that regulate energy metabolism and inflammation. Hydrolyzes N-acyl phosphatidylethanolamines to N-acyl lysophosphatidylethanolamines, which are further cleaved by a lysophospholipase D to release N-acyl ethanolamines. Independent of its catalytic activity, acts as a ligand for integrins. Binds to and activates integrins ITGAV:ITGB3, ITGA4:ITGB1 and ITGA5:ITGB1. Binds to a site (site 2) which is distinct from the classical ligand-binding site (site 1) and induces integrin conformational changes and enhanced ligand binding to site 1. Induces cell proliferation in an integrin-dependent manner. The chain is Phospholipase A2, membrane associated (Pla2g2a) from Mus musculus (Mouse).